We begin with the raw amino-acid sequence, 499 residues long: MSWIKNVTESPTSLIKKVSCGLIIAASLYAIAPSLSALVFGDSKQSIGKYTTVGLINRGNDCFITSSLQGLAGIPRFVEYLKRIRTVLLELETKLSNNAKGDNPTVDNTTRHSRLENSSNSLAPLHESLTSLILDLISVKDRKTSISPKIVINTLESIFKSKISSKQNDAHEFTLILLQTLQEERSKLIDYSKQICNLNIPKFPFEGETSKFLVCLKCKGLSEPSYKQTFIRELSVPQQTSENLSNILAHDETEIIDDYSCLICQIRAILNHEEYRNFKDCTPDEILMLDRLKNYATKAPINENLPFEVEQYVKRYSKGNLQVSNIKGKVIKKDVVVQLPDILIVHLSRSTFNGITYSRNPCNVKFGERITLSEYTLAESGTITENRQVKYNLKSVVKHTGSHSSGHYMCYRRKTEIRFGKEDESSFRRAPVVNNEVNKNREQNVAHNDYKKSRYKKVKNALRYPYWQISDTAIKESTASTVLNEQKYAYMLYYERVNK.

A USP domain is found at 53 to 497; the sequence is VGLINRGNDC…YAYMLYYERV (445 aa). Cys-62 (nucleophile) is an active-site residue. The active-site Proton acceptor is His-407.

The protein belongs to the peptidase C19 family.

It carries out the reaction Thiol-dependent hydrolysis of ester, thioester, amide, peptide and isopeptide bonds formed by the C-terminal Gly of ubiquitin (a 76-residue protein attached to proteins as an intracellular targeting signal).. The chain is Ubiquitin carboxyl-terminal hydrolase 16 (UBP16) from Saccharomyces cerevisiae (strain ATCC 204508 / S288c) (Baker's yeast).